A 431-amino-acid polypeptide reads, in one-letter code: Adenylosuccinate synthetase (431 aa).

Residues 12–18 (GDEGKGK) and 40–42 (GHT) each bind GTP. D13 serves as the catalytic Proton acceptor. Mg(2+) contacts are provided by D13 and G40. Residues 13 to 16 (DEGK), 38 to 41 (NAGH), T131, R145, Q225, T240, and R304 contribute to the IMP site. Catalysis depends on H41, which acts as the Proton donor. 300 to 306 (VNTGRRR) serves as a coordination point for substrate. GTP contacts are provided by residues R306, 332-334 (KLD), and 414-416 (STS).

The protein belongs to the adenylosuccinate synthetase family. Homodimer. Mg(2+) is required as a cofactor.

The protein resides in the cytoplasm. It catalyses the reaction IMP + L-aspartate + GTP = N(6)-(1,2-dicarboxyethyl)-AMP + GDP + phosphate + 2 H(+). It participates in purine metabolism; AMP biosynthesis via de novo pathway; AMP from IMP: step 1/2. Functionally, plays an important role in the de novo pathway of purine nucleotide biosynthesis. Catalyzes the first committed step in the biosynthesis of AMP from IMP. This chain is Adenylosuccinate synthetase, found in Beijerinckia indica subsp. indica (strain ATCC 9039 / DSM 1715 / NCIMB 8712).